A 432-amino-acid polypeptide reads, in one-letter code: Tyrosine--tRNA ligase (432 aa).

Residue tyrosine 35 participates in L-tyrosine binding. A 'HIGH' region motif is present at residues 40–49; sequence PTAGSLHVGH. Positions 175 and 179 each coordinate L-tyrosine. A 'KMSKS' region motif is present at residues 239–243; the sequence is KFGKT. An ATP-binding site is contributed by lysine 242. The S4 RNA-binding domain occupies 365-422; it reads PPLVDLFASTGLVPSKSAARRTIQEGGAYLNNAKVTDIEARVSEADLLHGRYLVLRRG.

This sequence belongs to the class-I aminoacyl-tRNA synthetase family. TyrS type 1 subfamily. Homodimer.

The protein localises to the cytoplasm. The catalysed reaction is tRNA(Tyr) + L-tyrosine + ATP = L-tyrosyl-tRNA(Tyr) + AMP + diphosphate + H(+). Its function is as follows. Catalyzes the attachment of tyrosine to tRNA(Tyr) in a two-step reaction: tyrosine is first activated by ATP to form Tyr-AMP and then transferred to the acceptor end of tRNA(Tyr). The protein is Tyrosine--tRNA ligase of Thermobifida fusca (strain YX).